Consider the following 418-residue polypeptide: Outer membrane protein assembly factor BamB (418 aa).

The N-terminal stretch at 1-28 (MFHNTCGRKGRFARAMGMALAISVTLSG) is a signal peptide. Cys29 carries N-palmitoyl cysteine lipidation. A lipid anchor (S-diacylglycerol cysteine) is attached at Cys29.

Belongs to the BamB family. Part of the Bam complex.

It is found in the cell outer membrane. Part of the outer membrane protein assembly complex, which is involved in assembly and insertion of beta-barrel proteins into the outer membrane. In Alteromonas naphthalenivorans, this protein is Outer membrane protein assembly factor BamB.